The following is a 189-amino-acid chain: Peptidyl-tRNA hydrolase (189 aa).

Residue Y14 participates in tRNA binding. H19 serves as the catalytic Proton acceptor. Residues F64, N66, and N112 each contribute to the tRNA site.

It belongs to the PTH family. Monomer.

It is found in the cytoplasm. The enzyme catalyses an N-acyl-L-alpha-aminoacyl-tRNA + H2O = an N-acyl-L-amino acid + a tRNA + H(+). Its function is as follows. Hydrolyzes ribosome-free peptidyl-tRNAs (with 1 or more amino acids incorporated), which drop off the ribosome during protein synthesis, or as a result of ribosome stalling. Catalyzes the release of premature peptidyl moieties from peptidyl-tRNA molecules trapped in stalled 50S ribosomal subunits, and thus maintains levels of free tRNAs and 50S ribosomes. This chain is Peptidyl-tRNA hydrolase, found in Sphingopyxis alaskensis (strain DSM 13593 / LMG 18877 / RB2256) (Sphingomonas alaskensis).